Reading from the N-terminus, the 275-residue chain is Light-independent protochlorophyllide reductase iron-sulfur ATP-binding protein (275 aa).

Residues 12–17 and K41 contribute to the ATP site; that span reads GIGKST. Mg(2+) is bound at residue S16. Residues C97 and C131 each coordinate [4Fe-4S] cluster. 182 to 183 lines the ATP pocket; it reads NR.

Belongs to the NifH/BchL/ChlL family. Homodimer. Protochlorophyllide reductase is composed of three subunits; BchL, BchN and BchB. It depends on [4Fe-4S] cluster as a cofactor.

The catalysed reaction is chlorophyllide a + oxidized 2[4Fe-4S]-[ferredoxin] + 2 ADP + 2 phosphate = protochlorophyllide a + reduced 2[4Fe-4S]-[ferredoxin] + 2 ATP + 2 H2O. It participates in porphyrin-containing compound metabolism; bacteriochlorophyll biosynthesis (light-independent). Its function is as follows. Component of the dark-operative protochlorophyllide reductase (DPOR) that uses Mg-ATP and reduced ferredoxin to reduce ring D of protochlorophyllide (Pchlide) to form chlorophyllide a (Chlide). This reaction is light-independent. The L component serves as a unique electron donor to the NB-component of the complex, and binds Mg-ATP. This Chlorobium phaeobacteroides (strain BS1) protein is Light-independent protochlorophyllide reductase iron-sulfur ATP-binding protein.